The sequence spans 660 residues: tRNA 5-methylaminomethyl-2-thiouridine biosynthesis bifunctional protein MnmC (660 aa).

The segment at 1-242 (MTDRIVPATL…KRAMLVGEFA (242 aa)) is tRNA (mnm(5)s(2)U34)-methyltransferase. The segment at 266–660 (IGAGLAGCAV…VRALRHGRVA (395 aa)) is FAD-dependent cmnm(5)s(2)U34 oxidoreductase.

This sequence in the N-terminal section; belongs to the methyltransferase superfamily. tRNA (mnm(5)s(2)U34)-methyltransferase family. It in the C-terminal section; belongs to the DAO family. FAD is required as a cofactor.

Its subcellular location is the cytoplasm. It carries out the reaction 5-aminomethyl-2-thiouridine(34) in tRNA + S-adenosyl-L-methionine = 5-methylaminomethyl-2-thiouridine(34) in tRNA + S-adenosyl-L-homocysteine + H(+). In terms of biological role, catalyzes the last two steps in the biosynthesis of 5-methylaminomethyl-2-thiouridine (mnm(5)s(2)U) at the wobble position (U34) in tRNA. Catalyzes the FAD-dependent demodification of cmnm(5)s(2)U34 to nm(5)s(2)U34, followed by the transfer of a methyl group from S-adenosyl-L-methionine to nm(5)s(2)U34, to form mnm(5)s(2)U34. In Burkholderia pseudomallei (strain K96243), this protein is tRNA 5-methylaminomethyl-2-thiouridine biosynthesis bifunctional protein MnmC.